The following is a 281-amino-acid chain: Protein-S-isoprenylcysteine O-methyltransferase (281 aa).

Topologically, residues 1–2 (ML) are cytoplasmic. A helical membrane pass occupies residues 3–29 (SPAGKISLQSFTGSSLVFFVICMFNHY). Residues 30–35 (YGITNL) lie on the Lumenal side of the membrane. The helical transmembrane segment at 36–53 (VVNTLIVFFYAVNVYFFL) threads the bilayer. Residues 54–58 (KFFYN) are Cytoplasmic-facing. Residues 59 to 85 (EFAFAIAIRAAFLGLVLVLGLYIKLVA) form a helical membrane-spanning segment. Topologically, residues 86-88 (PPN) are lumenal. A helical membrane pass occupies residues 89 to 113 (IQIFGGYMSVMALFHYSEFLAIAIV). At 114 to 118 (QPKQV) the chain is on the cytoplasmic side. Residues 119–149 (STDSFVINHSPQYTIAAVSSWVEFFIETYFF) traverse the membrane as a helical segment. At 150–155 (PGLKEI) the chain is on the lumenal side. The helical transmembrane segment at 156-181 (HWLSNIGLCVCILGEVLRKTAILTAG) threads the bilayer. Over 182–208 (SNFNHLVQCEKSSDHVLVTHGVYAWFR) the chain is Cytoplasmic. S-adenosyl-L-methionine-binding positions include Q189, 196–199 (HVLV), Y204, and 209–212 (HPSY). The helical transmembrane segment at 209 to 226 (HPSYVGWFYWSIGTQIIL) threads the bilayer. Residues 227–229 (INP) lie on the Lumenal side of the membrane. A helical transmembrane segment spans residues 230–243 (LCIPAYTLASWMFF). Residues 244–281 (KERIYIEESMLLSFFGQQYCDYQQQVGTGIPFIEGYKI) lie on the Cytoplasmic side of the membrane. R246 lines the substrate pocket. E250 contributes to the S-adenosyl-L-methionine binding site.

This sequence belongs to the class VI-like SAM-binding methyltransferase superfamily. Isoprenylcysteine carboxyl methyltransferase family.

Its subcellular location is the endoplasmic reticulum membrane. It carries out the reaction [protein]-C-terminal S-[(2E,6E)-farnesyl]-L-cysteine + S-adenosyl-L-methionine = [protein]-C-terminal S-[(2E,6E)-farnesyl]-L-cysteine methyl ester + S-adenosyl-L-homocysteine. Its function is as follows. Catalyzes the post-translational methylation of isoprenylated C-terminal cysteine residues. In Tribolium castaneum (Red flour beetle), this protein is Protein-S-isoprenylcysteine O-methyltransferase.